The sequence spans 949 residues: Protocadherin alpha-11 (949 aa).

The first 29 residues, M1–G29, serve as a signal peptide directing secretion. Cadherin domains are found at residues Q30 to F133, A157 to F242, D243 to V349, A350 to F454, A455 to L564, and V580 to A677. Topologically, residues Q30 to N696 are extracellular. 2 N-linked (GlcNAc...) asparagine glycosylation sites follow: N265 and N304. N547 carries N-linked (GlcNAc...) asparagine glycosylation. The chain crosses the membrane as a helical span at residues V697–Y717. Over T718–Q949 the chain is Cytoplasmic. 2 PXXP repeats span residues P733 to P736 and P773 to P776. Residues P733–P893 form a 6 X 4 AA repeats of P-X-X-P region. 2 disordered regions span residues R753–Y807 and I826–Q949. A compositionally biased stretch (basic and acidic residues) spans N780–E789. PXXP repeat units lie at residues P795 to P798, P831 to P834, P872 to P875, and P890 to P893. The segment covering D908–K922 has biased composition (basic and acidic residues).

It is found in the cell membrane. Functionally, potential calcium-dependent cell-adhesion protein. May be involved in the establishment and maintenance of specific neuronal connections in the brain. The sequence is that of Protocadherin alpha-11 (PCDHA11) from Homo sapiens (Human).